Here is a 161-residue protein sequence, read N- to C-terminus: DNA-directed RNA polymerase 18 kDa subunit (161 aa).

This sequence belongs to the poxviridae DNA-directed RNA polymerase 18 kDa subunit family. In terms of assembly, the DNA-dependent RNA polymerase used for intermediate and late genes expression consists of eight subunits 147 kDa, 133 kDa, 35 kDa, 30 kDa, 22 kDa, 19 kDa, 18 kDa and 7 kDa totalling more than 500 kDa in mass. The same holoenzyme, with the addition of the transcription-specificity factor RAP94, is used for early gene expression.

It is found in the virion. It carries out the reaction RNA(n) + a ribonucleoside 5'-triphosphate = RNA(n+1) + diphosphate. Part of the DNA-dependent RNA polymerase which catalyzes the transcription of viral DNA into RNA using the four ribonucleoside triphosphates as substrates. Responsible for the transcription of early, intermediate and late genes. DNA-dependent RNA polymerase associates with the early transcription factor (ETF) thereby allowing the early genes transcription. Late transcription, and probably also intermediate transcription, require newly synthesized RNA polymerase. The chain is DNA-directed RNA polymerase 18 kDa subunit (RPO18) from Vertebrata (FPV).